Consider the following 286-residue polypeptide: ATP synthase gamma chain (286 aa).

The protein belongs to the ATPase gamma chain family. As to quaternary structure, F-type ATPases have 2 components, CF(1) - the catalytic core - and CF(0) - the membrane proton channel. CF(1) has five subunits: alpha(3), beta(3), gamma(1), delta(1), epsilon(1). CF(0) has three main subunits: a, b and c.

The protein localises to the cell inner membrane. Functionally, produces ATP from ADP in the presence of a proton gradient across the membrane. The gamma chain is believed to be important in regulating ATPase activity and the flow of protons through the CF(0) complex. The protein is ATP synthase gamma chain of Dechloromonas aromatica (strain RCB).